Consider the following 320-residue polypeptide: MYYKVILGIESSCDDLSIAIAIDNKIVTTKTKSSSSVHANYGGVVPEIAARYHEEILHQTLNEALTEANLTINKIDLITYTENPGLLNCLHVAKVFANTLGYLLKIPAQGINHLYGHIFSPMIDDGDCLYQKSDLIYPALGIVVSGGHTAIYDVQSPSKITLLDETLDDAIGEVYDKVGRALGLQYPAGAKIDQLYNPEQAETVEFLKTNKLSAFSYSGFKSAVLRYIELNKNQPDFNLVQAVSSFQKFIIDDFIDRIKNVINKADSKYQTILLGGGVSANSYLRSELKELAIKTLVPKPIYSGDNAAMIINYAQYLLNE.

2 residues coordinate Fe cation: His113 and His117. Substrate is bound by residues 143 to 147, Asp176, Gly189, Asp193, and Asn281; that span reads VVSGG. Asp305 is a binding site for Fe cation.

The protein belongs to the KAE1 / TsaD family. Requires Fe(2+) as cofactor.

The protein resides in the cytoplasm. The catalysed reaction is L-threonylcarbamoyladenylate + adenosine(37) in tRNA = N(6)-L-threonylcarbamoyladenosine(37) in tRNA + AMP + H(+). Functionally, required for the formation of a threonylcarbamoyl group on adenosine at position 37 (t(6)A37) in tRNAs that read codons beginning with adenine. Is involved in the transfer of the threonylcarbamoyl moiety of threonylcarbamoyl-AMP (TC-AMP) to the N6 group of A37, together with TsaE and TsaB. TsaD likely plays a direct catalytic role in this reaction. The sequence is that of tRNA N6-adenosine threonylcarbamoyltransferase from Mycoplasmoides gallisepticum (strain R(low / passage 15 / clone 2)) (Mycoplasma gallisepticum).